The chain runs to 453 residues: Adenosylmethionine-8-amino-7-oxononanoate aminotransferase (453 aa).

A pyridoxal 5'-phosphate-binding site is contributed by 118 to 119 (GA). A substrate-binding site is contributed by Tyr151. Pyridoxal 5'-phosphate is bound at residue Asp257. Positions 286, 321, and 416 each coordinate substrate. An N6-(pyridoxal phosphate)lysine modification is found at Lys286.

Belongs to the class-III pyridoxal-phosphate-dependent aminotransferase family. BioA subfamily. Homodimer. The cofactor is pyridoxal 5'-phosphate.

The protein resides in the cytoplasm. The catalysed reaction is (8S)-8-amino-7-oxononanoate + S-adenosyl-L-methionine = S-adenosyl-4-methylsulfanyl-2-oxobutanoate + (7R,8S)-7,8-diammoniononanoate. Its pathway is cofactor biosynthesis; biotin biosynthesis; 7,8-diaminononanoate from 8-amino-7-oxononanoate (SAM route): step 1/1. Its function is as follows. Catalyzes the transfer of the alpha-amino group from S-adenosyl-L-methionine (SAM) to 7-keto-8-aminopelargonic acid (KAPA) to form 7,8-diaminopelargonic acid (DAPA). It is the only aminotransferase known to utilize SAM as an amino donor. This chain is Adenosylmethionine-8-amino-7-oxononanoate aminotransferase, found in Aquifex aeolicus (strain VF5).